The following is a 447-amino-acid chain: Probable ribonuclease FAU-1 (447 aa).

Residues proline 424–alanine 447 form a disordered region.

This sequence belongs to the FAU-1 family.

Probable RNase involved in rRNA stability through maturation and/or degradation of precursor rRNAs. Binds to RNA in loop regions with AU-rich sequences. This Pyrobaculum neutrophilum (strain DSM 2338 / JCM 9278 / NBRC 100436 / V24Sta) (Thermoproteus neutrophilus) protein is Probable ribonuclease FAU-1.